A 111-amino-acid polypeptide reads, in one-letter code: MISTVALFWALCVVCIVNMARYFSSLRALLVVLRNCDPLLYQYVDGGGFFTSHGQPNKQVRLVWYIYAQRYRDHHDDEFIRRCERVRRQFILTSALCGLVVVSLIALMIWH.

2 consecutive transmembrane segments (helical) span residues Met-1–Arg-21 and Phe-90–Trp-110.

This sequence belongs to the universal stress protein B family.

The protein localises to the cell inner membrane. The polypeptide is Universal stress protein B (Escherichia coli O45:K1 (strain S88 / ExPEC)).